Reading from the N-terminus, the 446-residue chain is Alpha-galacturonidase (446 aa).

10-72 contributes to the NAD(+) binding site; sequence IKIAYIGGGS…GRWRYEAVST (63 aa). N151 provides a ligand contact to substrate. C173 contributes to the Mn(2+) binding site. H174 (proton donor) is an active-site residue. H210 is a binding site for Mn(2+).

This sequence belongs to the glycosyl hydrolase 4 family. As to quaternary structure, homotetramer. NAD(+) is required as a cofactor. The cofactor is Mn(2+).

The catalysed reaction is [(1-&gt;4)-alpha-D-galacturonosyl](n) + H2O = alpha-D-galacturonate + [(1-&gt;4)-alpha-D-galacturonosyl](n-1). Functionally, alpha-galacturonidase able to catalyze the hydrolysis of the chromogenic substrate p-nitrophenyl-alpha-D-galacturonic acid (pNPalphaGalUA), and of the probable natural substrate alpha-1,4-di-galacturonate (GalUA(2)). Can neither hydrolyze pNPbetaGalUA, nor the stereoisomeric pNPalphaGlcUA. Does not display alpha- or beta-glucosidase activity as it fails to hydrolyze melibiose, raffinose, lactose and the chromogenic analogs, pNPalphaGal and pNPbetaGal. Cannot use the following compounds as substrates: pNP-N-acetyl-alpha- and beta-D-galactosaminide, pNP-N-acetyl-alpha- and beta-D-glucosaminide, pNP-alpha-L- and beta-L-arabinopyranoside, pNP-alpha- and beta-D-glucuronide, pNP-alpha- and beta-D-glucopyranoside, pNP-alpha- and beta-D-glucopyranoside 6-phosphate, pNP-alpha-D-galactopyranoside 6-phosphate and oNP-beta-D-galactopyranoside 6-phosphate. The protein is Alpha-galacturonidase (lplD) of Bacillus subtilis (strain 168).